A 175-amino-acid polypeptide reads, in one-letter code: Large ribosomal subunit protein uL10 (175 aa).

The protein belongs to the universal ribosomal protein uL10 family. As to quaternary structure, part of the ribosomal stalk of the 50S ribosomal subunit. The N-terminus interacts with L11 and the large rRNA to form the base of the stalk. The C-terminus forms an elongated spine to which L12 dimers bind in a sequential fashion forming a multimeric L10(L12)X complex.

In terms of biological role, forms part of the ribosomal stalk, playing a central role in the interaction of the ribosome with GTP-bound translation factors. The sequence is that of Large ribosomal subunit protein uL10 from Prochlorococcus marinus (strain NATL1A).